Consider the following 67-residue polypeptide: DNA-directed RNA polymerase subunit omega (67 aa).

It belongs to the RNA polymerase subunit omega family. As to quaternary structure, the RNAP catalytic core consists of 2 alpha, 1 beta, 1 beta' and 1 omega subunit. When a sigma factor is associated with the core the holoenzyme is formed, which can initiate transcription.

It carries out the reaction RNA(n) + a ribonucleoside 5'-triphosphate = RNA(n+1) + diphosphate. Functionally, promotes RNA polymerase assembly. Latches the N- and C-terminal regions of the beta' subunit thereby facilitating its interaction with the beta and alpha subunits. This Listeria innocua serovar 6a (strain ATCC BAA-680 / CLIP 11262) protein is DNA-directed RNA polymerase subunit omega.